Here is a 225-residue protein sequence, read N- to C-terminus: Cytochrome b6-f complex iron-sulfur subunit, chloroplastic (225 aa).

Residues Met1–Gln46 constitute a chloroplast transit peptide. The helical transmembrane segment at Leu69–Ile89 threads the bilayer. Residues Ala112 to Phe208 form the Rieske domain. Positions 154, 156, 172, and 175 each coordinate [2Fe-2S] cluster. Cys159 and Cys174 form a disulfide bridge.

It belongs to the Rieske iron-sulfur protein family. As to quaternary structure, the 4 large subunits of the cytochrome b6-f complex are cytochrome b6, subunit IV (17 kDa polypeptide, petD), cytochrome f and the Rieske protein, while the 4 small subunits are petG, petL, petM and petN. The complex functions as a dimer. It depends on [2Fe-2S] cluster as a cofactor.

The protein localises to the plastid. Its subcellular location is the chloroplast thylakoid membrane. It catalyses the reaction 2 oxidized [plastocyanin] + a plastoquinol + 2 H(+)(in) = 2 reduced [plastocyanin] + a plastoquinone + 4 H(+)(out). Its function is as follows. Component of the cytochrome b6-f complex, which mediates electron transfer between photosystem II (PSII) and photosystem I (PSI), cyclic electron flow around PSI, and state transitions. The polypeptide is Cytochrome b6-f complex iron-sulfur subunit, chloroplastic (petC) (Oryza sativa subsp. japonica (Rice)).